A 48-amino-acid polypeptide reads, in one-letter code: Gas vesicle protein A (48 aa).

The protein belongs to the gas vesicle GvpA family. In terms of assembly, the gas vesicle shell is 2 nm thick and consists of a single layer of this protein. It forms helical ribs nearly perpendicular to the long axis of the vesicle.

It localises to the gas vesicle shell. In terms of biological role, gas vesicles are hollow, gas filled proteinaceous nanostructures found in some microorganisms. During planktonic growth they allow positioning of the organism at a favorable depth for light or nutrient acquisition. GvpA forms the protein shell. The chain is Gas vesicle protein A from Spirulina sp. (strain CCAP 1475/10).